Consider the following 172-residue polypeptide: DCC family protein At1g52590, chloroplastic (172 aa).

Residues 1 to 25 constitute a chloroplast transit peptide; the sequence is MAILIPASFGRLTITSRAQVRVRVS.

The protein belongs to the DCC thiol-disulfide oxidoreductase family.

The protein resides in the plastid. Its subcellular location is the chloroplast. The polypeptide is DCC family protein At1g52590, chloroplastic (Arabidopsis thaliana (Mouse-ear cress)).